A 266-amino-acid chain; its full sequence is Blue copper protein (266 aa).

Positions 1-24 (MAYSKILFCFMIGFVGFLPAITMA) are cleaved as a signal peptide. Phytocyanin domains follow at residues 25-56 (TQYLVGDDRGWTLDFDYQTWAKNKTFKVGDTL), 57-102 (APPP…TVED), and 116-216 (TEYW…TVEG). The N-linked (GlcNAc...) asparagine glycan is linked to N47. H156 contributes to the Cu cation binding site. A glycan (N-linked (GlcNAc...) asparagine) is linked at N162. C169 and C203 are disulfide-bonded. The Cu cation site is built by C197, H202, and Q208. A helical membrane pass occupies residues 245 to 265 (ITSPYKMFVGGAVSIWTILTL).

It localises to the membrane. The sequence is that of Blue copper protein from Petunia hybrida (Petunia).